Here is a 281-residue protein sequence, read N- to C-terminus: Shikimate dehydrogenase (NADP(+)) (281 aa).

Residues 15-17 (SKS) and T62 each bind shikimate. K66 functions as the Proton acceptor in the catalytic mechanism. N87 and D102 together coordinate shikimate. Residues 127–131 (GAGGS), 151–156 (NRTPER), and L217 contribute to the NADP(+) site. Y219 contacts shikimate. Position 241 (G241) interacts with NADP(+).

This sequence belongs to the shikimate dehydrogenase family. In terms of assembly, homodimer.

The catalysed reaction is shikimate + NADP(+) = 3-dehydroshikimate + NADPH + H(+). The protein operates within metabolic intermediate biosynthesis; chorismate biosynthesis; chorismate from D-erythrose 4-phosphate and phosphoenolpyruvate: step 4/7. Functionally, involved in the biosynthesis of the chorismate, which leads to the biosynthesis of aromatic amino acids. Catalyzes the reversible NADPH linked reduction of 3-dehydroshikimate (DHSA) to yield shikimate (SA). The chain is Shikimate dehydrogenase (NADP(+)) from Stenotrophomonas maltophilia (strain K279a).